Here is a 390-residue protein sequence, read N- to C-terminus: Putative F-box protein At3g52320 (390 aa).

Positions 21–71 (VVFLPEIPEEMLIDILIRLPAKSLMRFKCVSKLWLSLITSRYFTNRFFKPS) constitute an F-box domain.

The sequence is that of Putative F-box protein At3g52320 from Arabidopsis thaliana (Mouse-ear cress).